The sequence spans 510 residues: MIWHVQNENFILDSTRIFMKAFHLLLFDGSFIFPECILIFGLILLLMIDSTSDQKDIPWLYFISSTSLVMSITALLFRWREEPMISFSGNFQTNNFNEIFQFLILLCSTLCIPLSVEYIECTEMAITEFLLFVLTATLGGMFLCGANDLITIFVAPECFSLCSYLLSGYTKKDVRSNEATMKYLLMGGASSSILVHGFSWLYGSSGGEIELQEIVNGLINTQMYNSPGISIALIFITVGIGFKLSLAPSHQWTPDVYEGSPTPVVAFLSVTSKVAASASATRIFDIPFYFSSNEWHLLLEILAILSMILGNLIAITQTSMKRMLAYSSIGQIGYVIIGIIVGDSNGGYASMITYMLFYISMNLGTFACIVLFGLRTGTDNIRDYAGLYTKDPFLALSLALCLLSLGGLPPLAGFFGKLHLFWCGWQAGLYFLVSIGLLTSVVSIYYYLKIIKLLMTGRKQEITPHVRNYRGSPLRSNNSIELSMIVCVIASTILGISMNPIIAIAQDTLF.

Transmembrane regions (helical) follow at residues 24-44 (LLLF…GLIL), 57-77 (IPWL…ALLF), 99-119 (IFQF…VEYI), 124-144 (MAIT…MFLC), 149-169 (LITI…LSGY), 183-203 (YLLM…WLYG), 227-247 (PGIS…LSLA), 295-315 (WHLL…LIAI), 323-343 (MLAY…IVGD), 354-374 (YMLF…LFGL), 395-415 (ALSL…AGFF), 418-438 (LHLF…IGLL), and 484-504 (MIVC…IIAI).

It belongs to the complex I subunit 2 family. NDH is composed of at least 16 different subunits, 5 of which are encoded in the nucleus.

It is found in the plastid. The protein resides in the chloroplast thylakoid membrane. It carries out the reaction a plastoquinone + NADH + (n+1) H(+)(in) = a plastoquinol + NAD(+) + n H(+)(out). The enzyme catalyses a plastoquinone + NADPH + (n+1) H(+)(in) = a plastoquinol + NADP(+) + n H(+)(out). Its function is as follows. NDH shuttles electrons from NAD(P)H:plastoquinone, via FMN and iron-sulfur (Fe-S) centers, to quinones in the photosynthetic chain and possibly in a chloroplast respiratory chain. The immediate electron acceptor for the enzyme in this species is believed to be plastoquinone. Couples the redox reaction to proton translocation, and thus conserves the redox energy in a proton gradient. In Citrus sinensis (Sweet orange), this protein is NAD(P)H-quinone oxidoreductase subunit 2 B, chloroplastic.